The following is a 420-amino-acid chain: Gamma-glutamyl phosphate reductase (420 aa).

The protein belongs to the gamma-glutamyl phosphate reductase family.

It is found in the cytoplasm. It catalyses the reaction L-glutamate 5-semialdehyde + phosphate + NADP(+) = L-glutamyl 5-phosphate + NADPH + H(+). It participates in amino-acid biosynthesis; L-proline biosynthesis; L-glutamate 5-semialdehyde from L-glutamate: step 2/2. Functionally, catalyzes the NADPH-dependent reduction of L-glutamate 5-phosphate into L-glutamate 5-semialdehyde and phosphate. The product spontaneously undergoes cyclization to form 1-pyrroline-5-carboxylate. This Chlorobaculum parvum (strain DSM 263 / NCIMB 8327) (Chlorobium vibrioforme subsp. thiosulfatophilum) protein is Gamma-glutamyl phosphate reductase.